A 204-amino-acid polypeptide reads, in one-letter code: N-(5'-phosphoribosyl)anthranilate isomerase (204 aa).

The protein belongs to the TrpF family.

The catalysed reaction is N-(5-phospho-beta-D-ribosyl)anthranilate = 1-(2-carboxyphenylamino)-1-deoxy-D-ribulose 5-phosphate. It participates in amino-acid biosynthesis; L-tryptophan biosynthesis; L-tryptophan from chorismate: step 3/5. The protein is N-(5'-phosphoribosyl)anthranilate isomerase of Bacillus thuringiensis (strain Al Hakam).